Here is a 429-residue protein sequence, read N- to C-terminus: Adenylosuccinate synthetase (429 aa).

GTP-binding positions include 12–18 (GDEGKGK) and 40–42 (GHT). Asp13 functions as the Proton acceptor in the catalytic mechanism. Residues Asp13 and Gly40 each contribute to the Mg(2+) site. Residues 13–16 (DEGK), 38–41 (NAGH), Thr129, Arg143, Gln224, Thr239, and Arg303 contribute to the IMP site. Residue His41 is the Proton donor of the active site. A substrate-binding site is contributed by 299-305 (ATTGRRR). GTP is bound by residues Arg305, 331-333 (KLD), and 413-415 (SVG).

This sequence belongs to the adenylosuccinate synthetase family. Homodimer. Requires Mg(2+) as cofactor.

Its subcellular location is the cytoplasm. It carries out the reaction IMP + L-aspartate + GTP = N(6)-(1,2-dicarboxyethyl)-AMP + GDP + phosphate + 2 H(+). The protein operates within purine metabolism; AMP biosynthesis via de novo pathway; AMP from IMP: step 1/2. In terms of biological role, plays an important role in the de novo pathway of purine nucleotide biosynthesis. Catalyzes the first committed step in the biosynthesis of AMP from IMP. The protein is Adenylosuccinate synthetase of Desulforapulum autotrophicum (strain ATCC 43914 / DSM 3382 / VKM B-1955 / HRM2) (Desulfobacterium autotrophicum).